Reading from the N-terminus, the 217-residue chain is MGQKVCAHGFRVGPTLIKGWDSVLYAEKHYKTLFIQDLKIRDLINKGFNQAQVSRVLIERPSNKSIIISINAKKPNIIIGRNGSEIDKLKKAIEKMTFLKEVYINIHEVRKFNIDAAIVAQTIALQLEKRVSFRKAMKTAIQASLKQGGQGIRVSCSGRLGGAEIARTEWYIEGRMPLHTLRADIDYSTAEAITTYGVIGVKVWIYKGEYTENKRYN.

Residues 40–110 form the KH type-2 domain; the sequence is IRDLINKGFN…EVYINIHEVR (71 aa).

Belongs to the universal ribosomal protein uS3 family. Part of the 30S ribosomal subunit. Forms a tight complex with proteins S10 and S14.

In terms of biological role, binds the lower part of the 30S subunit head. Binds mRNA in the 70S ribosome, positioning it for translation. The sequence is that of Small ribosomal subunit protein uS3 from Rickettsia akari (strain Hartford).